A 128-amino-acid chain; its full sequence is uncharacterized protein (128 aa).

This is an uncharacterized protein from Schizosaccharomyces pombe (strain 972 / ATCC 24843) (Fission yeast).